Consider the following 688-residue polypeptide: Potassium-transporting ATPase ATP-binding subunit (688 aa).

Transmembrane regions (helical) follow at residues 35–55, 62–82, 219–239, and 260–280; these read VMFV…AMLA, ALFT…ANFA, IALT…CVTL, and VLIA…LSAI. Asp-313 (4-aspartylphosphate intermediate) is an active-site residue. ATP contacts are provided by residues Asp-350, Glu-354, 383–390, and Lys-401; that span reads FSAMTRMS. Mg(2+) contacts are provided by Asp-524 and Asp-528. The next 3 membrane-spanning stretches (helical) occupy residues 594 to 614, 622 to 642, and 667 to 687; these read FAII…LNIM, AVLS…PLAL, and GLIA…LLIL.

The protein belongs to the cation transport ATPase (P-type) (TC 3.A.3) family. Type IA subfamily. The system is composed of three essential subunits: KdpA, KdpB and KdpC.

The protein resides in the cell inner membrane. It catalyses the reaction K(+)(out) + ATP + H2O = K(+)(in) + ADP + phosphate + H(+). In terms of biological role, part of the high-affinity ATP-driven potassium transport (or Kdp) system, which catalyzes the hydrolysis of ATP coupled with the electrogenic transport of potassium into the cytoplasm. This subunit is responsible for energy coupling to the transport system and for the release of the potassium ions to the cytoplasm. The protein is Potassium-transporting ATPase ATP-binding subunit of Photorhabdus laumondii subsp. laumondii (strain DSM 15139 / CIP 105565 / TT01) (Photorhabdus luminescens subsp. laumondii).